The following is a 275-amino-acid chain: D-apionate oxidoisomerase (275 aa).

NAD(+) contacts are provided by residues 11–13 (GKM), Glu32, and Asp68. The Zn(2+) site is built by His113 and Glu183.

Belongs to the ApnO family. Requires Zn(2+) as cofactor.

It carries out the reaction D-apionate + NAD(+) = 3-oxoisoapionate + NADH + H(+). It functions in the pathway carbohydrate metabolism. Functionally, involved in catabolism of D-apiose. Catalyzes the conversion of D-apionate to 3-oxo-isoapionate. This is D-apionate oxidoisomerase from Rhizobium rhizogenes (strain K84 / ATCC BAA-868) (Agrobacterium radiobacter).